We begin with the raw amino-acid sequence, 167 residues long: Leptin (167 aa).

Positions 1-21 (MRCGPLYQFLWLWPYLSYVEA) are cleaved as a signal peptide. A disulfide bond links C117 and C167.

The protein belongs to the leptin family.

Its subcellular location is the secreted. Key player in the regulation of energy balance and body weight control. Once released into the circulation, has central and peripheral effects by binding LEPR, found in many tissues, which results in the activation of several major signaling pathways. In the hypothalamus, acts as an appetite-regulating factor that induces a decrease in food intake and an increase in energy consumption by inducing anorexinogenic factors and suppressing orexigenic neuropeptides, also regulates bone mass and secretion of hypothalamo-pituitary-adrenal hormones. In the periphery, increases basal metabolism, influences reproductive function, regulates pancreatic beta-cell function and insulin secretion, is pro-angiogenic for endothelial cell and affects innate and adaptive immunity. In the arcuate nucleus of the hypothalamus, activates by depolarization POMC neurons inducing FOS and SOCS3 expression to release anorexigenic peptides and inhibits by hyperpolarization NPY neurons inducing SOCS3 with a consequent reduction on release of orexigenic peptides. In addition to its known satiety inducing effect, has a modulatory role in nutrient absorption. In the intestine, reduces glucose absorption by enterocytes by activating PKC and leading to a sequential activation of p38, PI3K and ERK signaling pathways which exerts an inhibitory effect on glucose absorption. Acts as a growth factor on certain tissues, through the activation of different signaling pathways increases expression of genes involved in cell cycle regulation such as CCND1, via JAK2-STAT3 pathway, or VEGFA, via MAPK1/3 and PI3K-AKT1 pathways. May also play an apoptotic role via JAK2-STAT3 pathway and up-regulation of BIRC5 expression. Pro-angiogenic, has mitogenic activity on vascular endothelial cells and plays a role in matrix remodeling by regulating the expression of matrix metalloproteinases (MMPs) and tissue inhibitors of metalloproteinases (TIMPs). In innate immunity, modulates the activity and function of neutrophils by increasing chemotaxis and the secretion of oxygen radicals. Increases phagocytosis by macrophages and enhances secretion of pro-inflammatory mediators. Increases cytotoxic ability of NK cells. Plays a pro-inflammatory role, in synergy with IL1B, by inducing NOS2 which promotes the production of IL6, IL8 and Prostaglandin E2, through a signaling pathway that involves JAK2, PI3K, MAP2K1/MEK1 and MAPK14/p38. In adaptive immunity, promotes the switch of memory T-cells towards T helper-1 cell immune responses. Increases CD4(+)CD25(-) T-cell proliferation and reduces autophagy during TCR (T-cell receptor) stimulation, through MTOR signaling pathway activation and BCL2 up-regulation. The sequence is that of Leptin (LEP) from Bubalus bubalis (Domestic water buffalo).